Consider the following 543-residue polypeptide: Ipecac alkaloid beta-glucosidase 2 (543 aa).

A beta-D-glucoside contacts are provided by residues Q36, H140, 185-186, Y350, E422, W471, and F487; that span reads NE. Residue E186 is the Proton donor of the active site. Residue E422 is the Nucleophile of the active site.

The protein belongs to the glycosyl hydrolase 1 family.

Its subcellular location is the cytoplasm. It localises to the cytosol. The enzyme catalyses deacetylipecoside + H2O = deacetylipecoside aglycone + D-glucose. It catalyses the reaction deacetylisoipecoside + H2O = deacetylisoipecoside aglycone + D-glucose. It functions in the pathway alkaloid biosynthesis. Functionally, beta-glucosidase catalyzing deglucosylation on N-deacetylisoipecoside and N-deacetylipecoside. This is Ipecac alkaloid beta-glucosidase 2 from Carapichea ipecacuanha (Ipecac).